The primary structure comprises 1716 residues: MLASKHTPWRRLQGISFGMYSAEELKKLSVKSITNPRYVDSLGNPSADGLYDLALGPADSKEVCSTCVQDFNNCSGHLGHIDLPLTVYNPLLFDKLYLLLRGSCLNCHMLTCPRAAIHLLVCQLKVLDVGALQAVYELERILSRFLEETSDPSAFEIQEELEEYTSKILQNNLLGSQGAHVKNVCESRSKLVAHFWKTHMAAKRCPHCKTGRSVVRKEHNSKLTITYPAMVHKKSGQKDAELPEGAPAAPGIDEAQMGKRGYLTPSSAQEHLFAIWKNEGFFLNYLFSGLDDIGPESSFNPSMFFLDFIVVPPSRYRPINRLGDQMFTNGQTVNLQAVMKDAVLIRKLLAVMAQEQKLPCEMTEITIDKENDSSGAIDRSFLSLLPGQSLTDKLYNIWIRLQSHVNIVFDSDMDKLMLEKYPGIRQILEKKEGLFRKHMMGKRVDYAARSVICPDMYINTNEIGIPMVFATKLTYPQPVTPWNVQELRQAVINGPNVHPGASMVINEDGSRTALSAVDATQREAVAKQLLTPSTGIPKPQGAKVVCRHVKNGDILLLNRQPTLHRPSIQAHRAHILPEEKVLRLHYANCKAYNADFDGDEMNAHFPQSELGRAEAYVLACTDQQYLVPKDGQPLAGLIQDHMVSGANMTIRGCFFTREQYMELVYRGLTDKVGRVKLFPPAILKPFPLWTGKQVVSTLLINIIPEDYTPLNLTGKAKIGSKAWVKEKPRPVPDFDPDSMCESQVIIREGELLCGVLDKAHYGSSAYGLVHCCYEIYGGETSGRVLTCLARLFTAYLQLYRGFTLGVEDILVKPNADVMRQRIIEESTQCGPRAVRAALNLPEAASCDEIQGKWQDAIWRKDQRDFNMIDMKFKEEVNHYSNEINKACMPFGLHRQFPENNLQMMVQSGAKGSTVNTMQISCLLGQIELEGRRPPLMASGKSLPCFEPYEFTPRAGGFVTGRFLTGIRPPEFFFHCMAGREGLVDTAVKTSRSGYLQRCIIKHLEGLVIQYDLTVRDSDGSVVQFLYGEDGLDIPKTQFLQPKQFPFLASNYEVIMKSKHLHEVLSRADPQKVLRHFRAIKKWHHRHSSALLRKGAFLSFSQKIQAAVKALNLEGKTQNGRSPETQQMLQMWHELDEQSRRKYQKRAAPCPDPSLSVWRPDIHFASVSETFEKKIDDYSQEWAAQAEKSHNRSELSLDRLRTLLQLKWQRSLCDPGEAVGLLAAQSIGEPSTQMTLNTFHFAGRGEMNVTLGIPRLREILMVASANIKTPMMSVPVFNTKKALRRVKSLKKQLTRVCLGEVLQKVDIQESFCMGEKQNKFRVYELRFQFLPHAYYQQEKCLRPEDILHFMETRFFKLLMEAIKKKNSKASAFRSVNTRRATQKDLDDTEDSGRNRREEERDEEEEGNIVDAEAEEGDADASDTKRKEKQEEEVDYESEEEGEEEEEEDVQEEENIKGEGAHQTHEPDEEEGSGLEEESSQNPPCRHSRPQGAEAMERRIQAVRESHSFIEDYQYDTEESLWCQVTVKLPLMKINFDMSSLVVSLAHNAIVYTTKGITRCLLNETINSKNEKEFVLNTEGINLPELFKYSEVLDLRRLYSNDIHAVANTYGIEAALRVIEKEIKDVFAVYGIAVDPRHLSLVADYMCFEGVYKPLNRFGIQSSSSPLQQMTFETSFQFLKQATMMGSHDELKSPSACLVVGKVVKGGTGLFELKQPLR.

C64, C67, C74, H77, C104, and C107 together coordinate Zn(2+). The segment at 110 to 201 (LTCPRAAIHL…VAHFWKTHMA (92 aa)) is clamp. Zn(2+) contacts are provided by C205 and C208. The clamp stretch occupies residues 327–433 (FTNGQTVNLQ…IRQILEKKEG (107 aa)). The segment at 410 to 423 (DSDMDKLMLEKYPG) is rudder. Residues K431, R436, and R443 each coordinate DNA. The segment at 475-549 (YPQPVTPWNV…QGAKVVCRHV (75 aa)) is involved in RRN3 binding to Pol I complex. R559 lines the RNA pocket. The Mg(2+) site is built by D595, D597, and D599. D599 is a binding site for RNA. Residues 812–890 (KPNADVMRQR…NEINKACMPF (79 aa)) form a funnel region. Residues 967–1008 (RPPEFFFHCMAGREGLVDTAVKTSRSGYLQRCIIKHLEGLVI) form a bridging helix region. Positions 1067 to 1162 (ADPQKVLRHF…SLSVWRPDIH (96 aa)) are mediates the interaction with TOP2A. Positions 1214 to 1255 (PGEAVGLLAAQSIGEPSTQMTLNTFHFAGRGEMNVTLGIPRL) are trigger loop. Position 1256 (R1256) interacts with DNA. Residues 1368-1493 (ASAFRSVNTR…RHSRPQGAEA (126 aa)) are disordered. Over residues 1380–1397 (TQKDLDDTEDSGRNRREE) the composition is skewed to basic and acidic residues. Acidic residues-rich tracts occupy residues 1398-1419 (ERDE…DADA) and 1429-1451 (EEEV…VQEE). A compositionally biased stretch (basic and acidic residues) spans 1452 to 1464 (ENIKGEGAHQTHE). A compositionally biased stretch (acidic residues) spans 1465–1477 (PDEEEGSGLEEES).

This sequence belongs to the RNA polymerase beta' chain family. As to quaternary structure, component of the RNA polymerase I (Pol I) complex consisting of 13 subunits: a ten-subunit catalytic core composed of POLR1A/RPA1, POLR1B/RPA2, POLR1C/RPAC1, POLR1D/RPAC2, POLR1H/RPA12, POLR2E/RPABC1, POLR2F/RPABC2, POLR2H/RPABC3, POLR2K/RPABC4 and POLR2L/RPABC5; a mobile stalk subunit POLR1F/RPA43 protruding from the core and additional subunits homologous to general transcription factors POLR1E/RPA49 and POLR1G/RPA34. Part of Pol I pre-initiation complex (PIC), in which Pol I core assembles with RRN3 and promoter-bound UTBF and SL1/TIF-IB complex. Interacts (via dock II domain) with TOP2A; this interaction may assist Pol I transcription initiation by releasing supercoils occurring during DNA unwinding. Interacts with CAVIN1; this interaction induces the dissociation of Pol I complex paused at rDNA terminator sequences. Interacts with MYO1C. Interacts with ERBB2. Interacts with DDX11. Interacts with RECQL5. The cofactor is Mg(2+). Phosphorylated.

It is found in the nucleus. It localises to the nucleolus. The protein resides in the chromosome. The enzyme catalyses RNA(n) + a ribonucleoside 5'-triphosphate = RNA(n+1) + diphosphate. Its function is as follows. Catalytic core component of RNA polymerase I (Pol I), a DNA-dependent RNA polymerase which synthesizes ribosomal RNA precursors using the four ribonucleoside triphosphates as substrates. Transcribes 47S pre-rRNAs from multicopy rRNA gene clusters, giving rise to 5.8S, 18S and 28S ribosomal RNAs. Pol I-mediated transcription cycle proceeds through transcription initiation, transcription elongation and transcription termination stages. During transcription initiation, Pol I pre-initiation complex (PIC) is recruited by the selectivity factor 1 (SL1/TIF-IB) complex bound to the core promoter that precedes an rDNA repeat unit. The PIC assembly bends the promoter favoring the formation of the transcription bubble and promoter escape. Once the polymerase has escaped from the promoter it enters the elongation phase during which RNA is actively polymerized, based on complementarity with the template DNA strand. Highly processive, assembles in structures referred to as 'Miller trees' where many elongating Pol I complexes queue and transcribe the same rDNA coding regions. At terminator sequences downstream of the rDNA gene, PTRF interacts with Pol I and halts Pol I transcription leading to the release of the RNA transcript and polymerase from the DNA. Forms Pol I active center together with the second largest subunit POLR1B/RPA2. Appends one nucleotide at a time to the 3' end of the nascent RNA, with POLR1A/RPA1 contributing a Mg(2+)-coordinating DxDGD motif, and POLR1B/RPA2 participating in the coordination of a second Mg(2+) ion and providing lysine residues believed to facilitate Watson-Crick base pairing between the incoming nucleotide and the template base. Typically, Mg(2+) ions direct a 5' nucleoside triphosphate to form a phosphodiester bond with the 3' hydroxyl of the preceding nucleotide of the nascent RNA, with the elimination of pyrophosphate. Has proofreading activity: Pauses and backtracks to allow the cleavage of a missincorporated nucleotide via POLR1H/RPA12. High Pol I processivity is associated with decreased transcription fidelity. The sequence is that of DNA-directed RNA polymerase I subunit RPA1 from Rattus norvegicus (Rat).